A 363-amino-acid polypeptide reads, in one-letter code: Type-2 angiotensin II receptor (363 aa).

Residues 1–45 (MKGNSTLATTSKNITSGLHFGLVNISGNNESTLNCSQKPSDKHLD) lie on the Extracellular side of the membrane. Residues N4, N13, N24, N29, and N34 are each glycosylated (N-linked (GlcNAc...) asparagine). 2 disulfides stabilise this stretch: C35–C290 and C117–C195. A helical transmembrane segment spans residues 46-70 (AIPILYYIIFVIGFLVNIVVVTLFC). Residues 71–80 (CQKGPKKVSS) lie on the Cytoplasmic side of the membrane. A helical membrane pass occupies residues 81-104 (IYIFNLAVADLLLLATLPLWATYY). Angiotensin II contacts are provided by Y103 and Y104. Residues 105-114 (SYRYDWLFGP) are Extracellular-facing. The chain crosses the membrane as a helical span at residues 115-140 (VMCKVFGSFLTLNMFASIFFITCMSV). The Cytoplasmic portion of the chain corresponds to 141-159 (DRYQSVIYPFLSQRRNPWQ). A helical transmembrane segment spans residues 160–181 (ASYIVPLVWCMACLSSLPTFYF). 3 residues coordinate angiotensin II: R182, Y204, and K215. Residues 182–206 (RDVRTIEYLGVNACIMAFPPEKYAQ) are Extracellular-facing. The helical transmembrane segment at 207–232 (WSAGIALMKNILGFIIPLIFIATCYF) threads the bilayer. At 233-257 (GIRKHLLKTNSYGKNRITRDQVLKM) the chain is on the cytoplasmic side. Residues 258-281 (AAAVVLAFIICWLPFHVLTFLDAL) form a helical membrane-spanning segment. Angiotensin II is bound at residue D279. The Extracellular segment spans residues 282-294 (AWMGVINSCEVIA). The helical transmembrane segment at 295-320 (VIDLALPFAILLGFTNSCVNPFLYCF) threads the bilayer. D297 contributes to the angiotensin II binding site. Residues 321 to 363 (VGNRFQQKLRSVFRVPITWLQGKRESMSCRKSSSLREMETFVS) are Cytoplasmic-facing. The segment at 324-333 (RFQQKLRSVF) is helix VIII.

Belongs to the G-protein coupled receptor 1 family. Interacts with MTUS1. As to expression, in adult, highly expressed in myometrium with lower levels in adrenal gland and fallopian tube. Expressed in the cerebellum. Very highly expressed in fetal kidney and intestine.

It is found in the cell membrane. Functionally, receptor for angiotensin II, a vasoconstricting peptide. Signals primarily via a non-canonical G-protein- and beta-arrestin independent pathways. Cooperates with MTUS1 to inhibit ERK2 activation and cell proliferation. The protein is Type-2 angiotensin II receptor of Homo sapiens (Human).